The sequence spans 609 residues: Pair-rule protein odd-paired (609 aa).

Residues 20 to 41 form a disordered region; it reads RMSPNTTASNSNAQQQQQQQLE. Polar residues predominate over residues 22–32; that stretch reads SPNTTASNSNA. The C2H2-type 1; atypical zinc-finger motif lies at 210-249; that stretch reads MQCLWIDPDQPGLVPPGGRKTCNKVFHSMHEIVTHLTVEH. 4 consecutive C2H2-type zinc fingers follow at residues 258 to 285, 291 to 315, 321 to 345, and 351 to 375; these read HACF…IRVH, FACP…KRTH, FKCE…SHVH, and YNCR…MKVH. Disordered stretches follow at residues 373–550 and 583–609; these read KVHG…ASAS and EAMN…ATAY. Residues 399-409 show a composition bias toward polar residues; that stretch reads IITGGAQTPPS. Low complexity-rich tracts occupy residues 414–434 and 449–498; these read GSAG…IKSS and HLGA…LTAH. Basic residues predominate over residues 528–537; that stretch reads SHHHHPHHHQ. Residues 538–550 show a composition bias toward low complexity; the sequence is AAPSPGAAAASAS. Positions 591 to 601 are enriched in basic residues; sequence FGHHHHHHHLM.

This sequence belongs to the GLI C2H2-type zinc-finger protein family. In terms of tissue distribution, expressed throughout all segment primordia; expressed ubiquitously in the ectoderm and mesoderm precursors.

Its subcellular location is the nucleus. Its function is as follows. Transcription factor essential for parasegmental subdivision of the embryo. It is involved in the activation of wingless (wg) in odd parasegments. It is also required for the timely activation of wg in the remaining parasegments and for the timely activation of engrailed (en) in all parasegments. The polypeptide is Pair-rule protein odd-paired (opa) (Drosophila melanogaster (Fruit fly)).